The chain runs to 215 residues: MSDNAQLSGLCDRFRGFYPVVIDVETAGFNAKTDALLEIAAITLKMDEQGWLMPDMTLHFHVEPFAGANLQPEALAFNGIDPSNPLRGAVSEYEALHAIFKMVRKGIKDSGCSRAIMVAHNATFDHSFMMAAAERASLKRNPFHPFVTFDTAALSGLALGQTVLSKACLAAGMEFDGEKAHSALYDTERTAVLFCEIVNRWKRLGGWPLPLPTDK.

One can recognise an Exonuclease domain in the interval 20–194; that stretch reads VVIDVETAGF…YDTERTAVLF (175 aa). Mg(2+) is bound by residues aspartate 23, glutamate 25, histidine 181, and aspartate 186. The Proton donor/acceptor role is filled by histidine 181.

Belongs to the RNase T family. As to quaternary structure, homodimer. Mg(2+) serves as cofactor.

Its function is as follows. Trims short 3' overhangs of a variety of RNA species, leaving a one or two nucleotide 3' overhang. Responsible for the end-turnover of tRNA: specifically removes the terminal AMP residue from uncharged tRNA (tRNA-C-C-A). Also appears to be involved in tRNA biosynthesis. This chain is Ribonuclease T, found in Salmonella paratyphi A (strain ATCC 9150 / SARB42).